The following is a 263-amino-acid chain: MVQTVYKNSDQTVFEDAKALFQLNKNILLKGPTGSGKTKLAETLSHVMNLPMHQVNCSVDLDTESLLGFKTIQTNEEGHQEIVFIDGPVIKAMKEGHILYIDEINMAKPETLPILNGVLDYRRQLTNPYTGEVIKAAPGFNVIAAINEGYVGTLPMNEALKNRFIVIEVDYIDGDILKTVIKEQSKLQDEQLIQHIIKFNEDLRTMTKQGQISEEAASIRALIDLSDLATVMPIERAVQRTIIDKLEDEREQQAILNAIELNF.

31-38 (GPTGSGKT) contributes to the ATP binding site.

The protein belongs to the CbbQ/NirQ/NorQ/GpvN family.

This is an uncharacterized protein from Staphylococcus epidermidis (strain ATCC 35984 / DSM 28319 / BCRC 17069 / CCUG 31568 / BM 3577 / RP62A).